The following is a 245-amino-acid chain: Ribonuclease 3 (245 aa).

The region spanning 19–148 (FKVFQEKIGI…FIGALYLDQG (130 aa)) is the RNase III domain. E61 contacts Mg(2+). Residue D65 is part of the active site. The Mg(2+) site is built by D134 and E137. E137 is an active-site residue. Positions 174-243 (DYKSQLQELI…AAEALKKLKE (70 aa)) constitute a DRBM domain.

This sequence belongs to the ribonuclease III family. As to quaternary structure, homodimer. Mg(2+) serves as cofactor.

The protein resides in the cytoplasm. It carries out the reaction Endonucleolytic cleavage to 5'-phosphomonoester.. Its function is as follows. Digests double-stranded RNA. Involved in the processing of primary rRNA transcript to yield the immediate precursors to the large and small rRNAs (23S and 16S). Processes some mRNAs, and tRNAs when they are encoded in the rRNA operon. Processes pre-crRNA and tracrRNA of type II CRISPR loci if present in the organism. The chain is Ribonuclease 3 from Bacillus cereus (strain AH187).